We begin with the raw amino-acid sequence, 126 residues long: MAIVGLGTDIAEIERVEKALARSGVAFAERILSAQEMETFVSLKQQGRFLAKRFAAKEAASKALGTGIAHGVSFQDFTIKNDDNGKPYLQLAGRAAELAHQMGVCHTHLSLSDERHYAVATVIFES.

Residues D9 and E58 each coordinate Mg(2+).

It belongs to the P-Pant transferase superfamily. AcpS family. The cofactor is Mg(2+).

The protein localises to the cytoplasm. It carries out the reaction apo-[ACP] + CoA = holo-[ACP] + adenosine 3',5'-bisphosphate + H(+). Its function is as follows. Transfers the 4'-phosphopantetheine moiety from coenzyme A to a Ser of acyl-carrier-protein. The protein is Holo-[acyl-carrier-protein] synthase of Vibrio vulnificus (strain CMCP6).